We begin with the raw amino-acid sequence, 604 residues long: ATP-dependent RNA helicase DED1 (604 aa).

The span at 1–19 (MAELSEQVQNLSINDNNEN) shows a compositional bias: polar residues. The interval 1-55 (MAELSEQVQNLSINDNNENGYVPPHLRGKPRSARNNSSNYNNNNGGYNGGRGGGS) is disordered. Ala2 bears the N-acetylalanine mark. A compositionally biased stretch (low complexity) spans 34–45 (RNNSSNYNNNNG). Residues 46–55 (GYNGGRGGGS) are compositionally biased toward gly residues. Arg51 is modified (omega-N-methylarginine). A Dimethylated arginine; alternate modification is found at Arg62. At Arg62 the chain carries Omega-N-methylarginine; alternate. Positions 67–76 (NGGFFGGNNG) are enriched in gly residues. The tract at residues 67–94 (NGGFFGGNNGGSRSNGRSGGRWIDGKHV) is disordered. Positions 142–170 (TEFTSPPLDGLLLENIKLARFTKPTPVQK) match the Q motif motif. Residue Lys158 forms a Glycyl lysine isopeptide (Lys-Gly) (interchain with G-Cter in ubiquitin) linkage. Residues 173–362 (VPIVANGRDL…RDFLSDYIFL (190 aa)) enclose the Helicase ATP-binding domain. Residue 186–193 (AQTGSGKT) coordinates ATP. Phosphoserine occurs at positions 215, 218, and 263. Positions 306–309 (DEAD) match the DEAD box motif. The Helicase C-terminal domain occupies 373-533 (NITQKVLYVE…EVPSFLKDAM (161 aa)). A disordered region spans residues 533 to 604 (MMSAPGSRSN…SGGSNNSSWW (72 aa)). Phosphoserine is present on residues Ser535, Ser539, and Ser543. Arg545 is subject to Dimethylated arginine; alternate. The residue at position 545 (Arg545) is an Omega-N-methylarginine; alternate. A phosphoserine mark is found at Ser572 and Ser576. Omega-N-methylarginine is present on Arg578. Positions 584-604 (GSDSKSSGWGNSGGSNNSSWW) are enriched in low complexity. Position 598 is a phosphoserine (Ser598).

The protein belongs to the DEAD box helicase family. DDX3/DED1 subfamily. As to quaternary structure, interacts with the L-A virus GAG protein and the whole L-A virus particles.

It is found in the cytoplasm. The catalysed reaction is ATP + H2O = ADP + phosphate + H(+). Its function is as follows. ATP-binding RNA helicase involved in translation initiation. Remodels RNA in response to ADP and ATP concentrations by facilitating disruption, but also formation of RNA duplexes. Has weak ATP-dependent affinity for dsRNA, but strong ATP-dependent affinity for ssRNA. Acts as a virus host factor involved in the replication of the MBV and the L-A viruses by promoting the negative-strand RNA synthesis. May be involved in recognition of the preinitiation complex and DNA binding of the RNA polymerase III and play a role in mRNA splicing. This is ATP-dependent RNA helicase DED1 from Saccharomyces cerevisiae (strain ATCC 204508 / S288c) (Baker's yeast).